Here is a 145-residue protein sequence, read N- to C-terminus: 3-dehydroquinate dehydratase (145 aa).

Tyr24 functions as the Proton acceptor in the catalytic mechanism. Substrate contacts are provided by Asn75, His81, and Asp88. The active-site Proton donor is His101. Residues 102 to 103 (LS) and Arg112 each bind substrate.

It belongs to the type-II 3-dehydroquinase family. Homododecamer.

The catalysed reaction is 3-dehydroquinate = 3-dehydroshikimate + H2O. It participates in metabolic intermediate biosynthesis; chorismate biosynthesis; chorismate from D-erythrose 4-phosphate and phosphoenolpyruvate: step 3/7. In terms of biological role, catalyzes a trans-dehydration via an enolate intermediate. This is 3-dehydroquinate dehydratase from Phenylobacterium zucineum (strain HLK1).